The chain runs to 159 residues: Large ribosomal subunit protein uL15 (159 aa).

Over residues 1–11 (MKLNELRDNEG) the composition is skewed to basic and acidic residues. Residues 1–40 (MKLNELRDNEGARYQSKRLGRGIGSGKGKTSGKGVKGQTS) form a disordered region. The segment covering 21-35 (RGIGSGKGKTSGKGV) has biased composition (gly residues).

This sequence belongs to the universal ribosomal protein uL15 family. As to quaternary structure, part of the 50S ribosomal subunit.

Binds to the 23S rRNA. This chain is Large ribosomal subunit protein uL15, found in Paramagnetospirillum magneticum (strain ATCC 700264 / AMB-1) (Magnetospirillum magneticum).